Consider the following 273-residue polypeptide: Undecaprenyl-diphosphatase (273 aa).

7 helical membrane-spanning segments follow: residues 6 to 26 (SLLI…LPVS), 45 to 65 (AKTF…VMFW), 90 to 110 (LTLI…LLFH), 116 to 136 (LFNP…LIAA), 190 to 210 (YAAS…ATAL), 222 to 242 (GDIP…LIAI), and 252 to 272 (ISFI…YVVF).

It belongs to the UppP family.

It is found in the cell inner membrane. The enzyme catalyses di-trans,octa-cis-undecaprenyl diphosphate + H2O = di-trans,octa-cis-undecaprenyl phosphate + phosphate + H(+). In terms of biological role, catalyzes the dephosphorylation of undecaprenyl diphosphate (UPP). Confers resistance to bacitracin. The polypeptide is Undecaprenyl-diphosphatase (Escherichia coli O139:H28 (strain E24377A / ETEC)).